Reading from the N-terminus, the 256-residue chain is ATP synthase peripheral stalk subunit b, mitochondrial (256 aa).

A mitochondrion-targeting transit peptide spans 1–42; that stretch reads MLSRVVLSAAATAAPSLKNAAFLGPGVLQATRTFHTGQPHLV. Residue lysine 131 is modified to N6-succinyllysine. 6 positions are modified to N6-acetyllysine: lysine 139, lysine 154, lysine 162, lysine 221, lysine 233, and lysine 244.

This sequence belongs to the eukaryotic ATPase B chain family. Component of the ATP synthase complex composed at least of ATP5F1A/subunit alpha, ATP5F1B/subunit beta, ATP5MC1/subunit c (homooctomer), MT-ATP6/subunit a, MT-ATP8/subunit 8, ATP5ME/subunit e, ATP5MF/subunit f, ATP5MG/subunit g, ATP5MK/subunit k, ATP5MJ/subunit j, ATP5F1C/subunit gamma, ATP5F1D/subunit delta, ATP5F1E/subunit epsilon, ATP5PF/subunit F6, ATP5PB/subunit b, ATP5PD/subunit d, ATP5PO/subunit OSCP. ATP synthase complex consists of a soluble F(1) head domain (subunits alpha(3) and beta(3)) - the catalytic core - and a membrane F(0) domain - the membrane proton channel (subunits c, a, 8, e, f, g, k and j). These two domains are linked by a central stalk (subunits gamma, delta, and epsilon) rotating inside the F1 region and a stationary peripheral stalk (subunits F6, b, d, and OSCP).

The protein resides in the mitochondrion. It localises to the mitochondrion inner membrane. In terms of biological role, subunit b, of the mitochondrial membrane ATP synthase complex (F(1)F(0) ATP synthase or Complex V) that produces ATP from ADP in the presence of a proton gradient across the membrane which is generated by electron transport complexes of the respiratory chain. ATP synthase complex consist of a soluble F(1) head domain - the catalytic core - and a membrane F(1) domain - the membrane proton channel. These two domains are linked by a central stalk rotating inside the F(1) region and a stationary peripheral stalk. During catalysis, ATP synthesis in the catalytic domain of F(1) is coupled via a rotary mechanism of the central stalk subunits to proton translocation. In vivo, can only synthesize ATP although its ATP hydrolase activity can be activated artificially in vitro. Part of the complex F(0) domain. Part of the complex F(0) domain and the peripheric stalk, which acts as a stator to hold the catalytic alpha(3)beta(3) subcomplex and subunit a/ATP6 static relative to the rotary elements. The protein is ATP synthase peripheral stalk subunit b, mitochondrial of Homo sapiens (Human).